Here is a 903-residue protein sequence, read N- to C-terminus: Alanine--tRNA ligase (903 aa).

Residues His581, His585, Cys693, and His697 each coordinate Zn(2+).

It belongs to the class-II aminoacyl-tRNA synthetase family. Zn(2+) serves as cofactor.

The protein resides in the cytoplasm. The enzyme catalyses tRNA(Ala) + L-alanine + ATP = L-alanyl-tRNA(Ala) + AMP + diphosphate. Its function is as follows. Catalyzes the attachment of alanine to tRNA(Ala) in a two-step reaction: alanine is first activated by ATP to form Ala-AMP and then transferred to the acceptor end of tRNA(Ala). Also edits incorrectly charged Ser-tRNA(Ala) and Gly-tRNA(Ala) via its editing domain. In Psychrobacter sp. (strain PRwf-1), this protein is Alanine--tRNA ligase.